Consider the following 212-residue polypeptide: ATP synthase F(0) complex subunit a (212 aa).

Helical transmembrane passes span methionine 3–serine 23, tryptophan 58–leucine 78, glutamine 87–leucine 107, isoleucine 128–valine 148, leucine 154–threonine 174, and alanine 179–isoleucine 199.

The protein belongs to the ATPase A chain family. As to quaternary structure, component of the ATP synthase complex composed at least of ATP5F1A/subunit alpha, ATP5F1B/subunit beta, ATP5MC1/subunit c (homooctomer), MT-ATP6/subunit a, MT-ATP8/subunit 8, ATP5ME/subunit e, ATP5MF/subunit f, ATP5MG/subunit g, ATP5MK/subunit k, ATP5MJ/subunit j, ATP5F1C/subunit gamma, ATP5F1D/subunit delta, ATP5F1E/subunit epsilon, ATP5PF/subunit F6, ATP5PB/subunit b, ATP5PD/subunit d, ATP5PO/subunit OSCP. ATP synthase complex consists of a soluble F(1) head domain (subunits alpha(3) and beta(3)) - the catalytic core - and a membrane F(0) domain - the membrane proton channel (subunits c, a, 8, e, f, g, k and j). These two domains are linked by a central stalk (subunits gamma, delta, and epsilon) rotating inside the F1 region and a stationary peripheral stalk (subunits F6, b, d, and OSCP). Interacts with DNAJC30; interaction is direct.

The protein localises to the mitochondrion inner membrane. The catalysed reaction is H(+)(in) = H(+)(out). Subunit a, of the mitochondrial membrane ATP synthase complex (F(1)F(0) ATP synthase or Complex V) that produces ATP from ADP in the presence of a proton gradient across the membrane which is generated by electron transport complexes of the respiratory chain. ATP synthase complex consist of a soluble F(1) head domain - the catalytic core - and a membrane F(1) domain - the membrane proton channel. These two domains are linked by a central stalk rotating inside the F(1) region and a stationary peripheral stalk. During catalysis, ATP synthesis in the catalytic domain of F(1) is coupled via a rotary mechanism of the central stalk subunits to proton translocation. With the subunit c (ATP5MC1), forms the proton-conducting channel in the F(0) domain, that contains two crucial half-channels (inlet and outlet) that facilitate proton movement from the mitochondrial intermembrane space (IMS) into the matrix. Protons are taken up via the inlet half-channel and released through the outlet half-channel, following a Grotthuss mechanism. This chain is ATP synthase F(0) complex subunit a, found in Tropidurus montanus (Lizard).